A 549-amino-acid chain; its full sequence is Protein X92 (549 aa).

The chain is Protein X92 from Trypanosoma brucei brucei.